The chain runs to 657 residues: Methylenetetrahydrofolate reductase 1 (657 aa).

The active-site Proton donor/acceptor is E18. Residues 18–23 (EFFPPK) and 49–50 (TW) contribute to the NAD(+) site. FAD-binding positions include 49–50 (TW), H78, and 108–110 (RGD). D110 lines the substrate pocket. A Phosphoserine modification is found at S120. FAD contacts are provided by residues 129–130 (YA), Y152, D171, and K178. Positions 189 and 286 each coordinate substrate. S301 carries the phosphoserine modification. Positions 308-329 (VNESSEEEGEDETSGEIGSIEN) are disordered. A compositionally biased stretch (acidic residues) spans 311–321 (SSEEEGEDETS). S358 is subject to Phosphoserine.

The protein belongs to the methylenetetrahydrofolate reductase family. Requires FAD as cofactor.

The catalysed reaction is (6S)-5-methyl-5,6,7,8-tetrahydrofolate + NADP(+) = (6R)-5,10-methylene-5,6,7,8-tetrahydrofolate + NADPH + H(+). It carries out the reaction (6S)-5-methyl-5,6,7,8-tetrahydrofolate + NAD(+) = (6R)-5,10-methylene-5,6,7,8-tetrahydrofolate + NADH + H(+). It participates in one-carbon metabolism; tetrahydrofolate interconversion. The sequence is that of Methylenetetrahydrofolate reductase 1 (MET12) from Saccharomyces cerevisiae (strain ATCC 204508 / S288c) (Baker's yeast).